We begin with the raw amino-acid sequence, 299 residues long: Recombination-associated protein RdgC (299 aa).

This sequence belongs to the RdgC family.

The protein localises to the cytoplasm. It localises to the nucleoid. May be involved in recombination. This is Recombination-associated protein RdgC from Neisseria meningitidis serogroup A / serotype 4A (strain DSM 15465 / Z2491).